Consider the following 76-residue polypeptide: Signal recognition particle 9 kDa protein (76 aa).

The protein belongs to the SRP9 family. In terms of assembly, heterodimer with SRP14; binds RNA as heterodimer. Component of a signal recognition particle complex that consists of a 7SL RNA molecule of 300 nucleotides and six protein subunits: srpa-72, srpa-68, SRP54, F37F2.2/SRP19, F25G6.8/SRP14 and ZK512.4/SRP9.

The protein localises to the cytoplasm. Its function is as follows. Component of the signal recognition particle (SRP) complex, a ribonucleoprotein complex that mediates the cotranslational targeting of secretory and membrane proteins to the endoplasmic reticulum (ER). SRP9 together with SRP14 and the Alu portion of the SRP RNA, constitutes the elongation arrest domain of SRP. The complex of SRP9 and SRP14 is required for SRP RNA binding. The sequence is that of Signal recognition particle 9 kDa protein from Caenorhabditis elegans.